Reading from the N-terminus, the 357-residue chain is Carbamoyl phosphate synthase small chain (357 aa).

Residues 1–168 are CPSase; sequence MSKRLLILED…STATAYPSPN (168 aa). Serine 46, glycine 220, and glycine 222 together coordinate L-glutamine. The 186-residue stretch at 172-357 folds into the Glutamine amidotransferase type-1 domain; it reads KVVVVDFGLK…FMDLMDNFKK (186 aa). The active-site Nucleophile is cysteine 247. Positions 248, 251, 289, 291, and 292 each coordinate L-glutamine. Active-site residues include histidine 331 and aspartate 333.

It belongs to the CarA family. As to quaternary structure, composed of two chains; the small (or glutamine) chain promotes the hydrolysis of glutamine to ammonia, which is used by the large (or ammonia) chain to synthesize carbamoyl phosphate. Tetramer of heterodimers (alpha,beta)4.

It catalyses the reaction hydrogencarbonate + L-glutamine + 2 ATP + H2O = carbamoyl phosphate + L-glutamate + 2 ADP + phosphate + 2 H(+). The enzyme catalyses L-glutamine + H2O = L-glutamate + NH4(+). The protein operates within amino-acid biosynthesis; L-arginine biosynthesis; carbamoyl phosphate from bicarbonate: step 1/1. It functions in the pathway pyrimidine metabolism; UMP biosynthesis via de novo pathway; (S)-dihydroorotate from bicarbonate: step 1/3. Its function is as follows. Small subunit of the glutamine-dependent carbamoyl phosphate synthetase (CPSase). CPSase catalyzes the formation of carbamoyl phosphate from the ammonia moiety of glutamine, carbonate, and phosphate donated by ATP, constituting the first step of 2 biosynthetic pathways, one leading to arginine and/or urea and the other to pyrimidine nucleotides. The small subunit (glutamine amidotransferase) binds and cleaves glutamine to supply the large subunit with the substrate ammonia. This is Carbamoyl phosphate synthase small chain from Lactococcus lactis subsp. cremoris (strain MG1363).